The chain runs to 295 residues: Protease HtpX (295 aa).

The next 2 helical transmembrane spans lie at 4–24 (IFLF…VLRL) and 42–62 (ALLI…LAIS). Residue His-147 coordinates Zn(2+). Glu-148 is a catalytic residue. His-151 is a Zn(2+) binding site. The next 2 membrane-spanning stretches (helical) occupy residues 155-175 (GDMV…IFLA) and 197-217 (FWIT…IIVM). Glu-224 contributes to the Zn(2+) binding site.

Belongs to the peptidase M48B family. Requires Zn(2+) as cofactor.

Its subcellular location is the cell inner membrane. In Thioalkalivibrio sulfidiphilus (strain HL-EbGR7), this protein is Protease HtpX.